We begin with the raw amino-acid sequence, 390 residues long: Probable splicing factor YJU2B (390 aa).

A disordered region spans residues 354-390; that stretch reads DACKASSSSEEENSIDSCATGKSLVADYSDSDSGSEV.

It belongs to the CWC16 family.

It is found in the nucleus. In terms of biological role, may be involved in mRNA splicing. The protein is Probable splicing factor YJU2B (yju2b) of Danio rerio (Zebrafish).